The primary structure comprises 127 residues: Large ribosomal subunit protein bL17 (127 aa).

The protein belongs to the bacterial ribosomal protein bL17 family. Part of the 50S ribosomal subunit. Contacts protein L32.

The polypeptide is Large ribosomal subunit protein bL17 (Vibrio vulnificus (strain CMCP6)).